A 261-amino-acid chain; its full sequence is MSTNTVPTPDDEGPTEWIGDLEVRRVSGDIQEHADLSTRSKARKQALDILFEADLIGTDPLEVLAARPGVFTNPVRPFAADLVRGVAATQVGLDSVLTDCLSEGWTLARMPRVDRILARLGAFEILHTDTPNPAVISEAIELSEEFSTDDSAPFLNGLLGAVITHGPARVEDQPSDDAASLTCPAPDGGSEQPPITVDDVGSMASSSDSFPAEVGNVDTTSGNASDPENSADDFELTGGEHPTSKDHELATDLHKKDTTDD.

Positions 168 to 261 (ARVEDQPSDD…DLHKKDTTDD (94 aa)) are disordered. Residues 217-228 (VDTTSGNASDPE) show a composition bias toward polar residues. The span at 242-261 (PTSKDHELATDLHKKDTTDD) shows a compositional bias: basic and acidic residues.

It belongs to the NusB family.

Its function is as follows. Involved in transcription antitermination. Required for transcription of ribosomal RNA (rRNA) genes. Binds specifically to the boxA antiterminator sequence of the ribosomal RNA (rrn) operons. This chain is Transcription antitermination protein NusB, found in Cutibacterium acnes (strain DSM 16379 / KPA171202) (Propionibacterium acnes).